A 201-amino-acid chain; its full sequence is Proteasome subunit beta 1 (201 aa).

Residue methionine 1 is a propeptide, removed in mature form; by autocatalysis. The active-site Nucleophile is threonine 2.

The protein belongs to the peptidase T1B family. In terms of assembly, the 20S proteasome core is composed of 14 alpha and 14 beta subunits that assemble into four stacked heptameric rings, resulting in a barrel-shaped structure. The two inner rings, each composed of seven catalytic beta subunits, are sandwiched by two outer rings, each composed of seven alpha subunits. The catalytic chamber with the active sites is on the inside of the barrel. Has a gated structure, the ends of the cylinder being occluded by the N-termini of the alpha-subunits. Is capped at one or both ends by the proteasome regulatory ATPase, PAN.

Its subcellular location is the cytoplasm. It catalyses the reaction Cleavage of peptide bonds with very broad specificity.. Its activity is regulated as follows. The formation of the proteasomal ATPase PAN-20S proteasome complex, via the docking of the C-termini of PAN into the intersubunit pockets in the alpha-rings, triggers opening of the gate for substrate entry. Interconversion between the open-gate and close-gate conformations leads to a dynamic regulation of the 20S proteasome proteolysis activity. Component of the proteasome core, a large protease complex with broad specificity involved in protein degradation. This chain is Proteasome subunit beta 1, found in Pyrobaculum neutrophilum (strain DSM 2338 / JCM 9278 / NBRC 100436 / V24Sta) (Thermoproteus neutrophilus).